Reading from the N-terminus, the 154-residue chain is PHA granule-associated protein PhaP (154 aa).

It is found in the cytoplasmic granule. In terms of biological role, polyhydroxyalkanoate (PHA) granule structural protein. Important for PHA granule formation and separation, and for cell growth. The sequence is that of PHA granule-associated protein PhaP (phaP) from Haloferax mediterranei (strain ATCC 33500 / DSM 1411 / JCM 8866 / NBRC 14739 / NCIMB 2177 / R-4) (Halobacterium mediterranei).